The following is a 212-amino-acid chain: Thylakoid membrane protein slr1949 (212 aa).

A helical membrane pass occupies residues 109–131 (WVQDGLLLLLALGLCGISGYRLW). Residues 180–212 (PNRRQRKQYETRLQALRQSAAKMKAKTQKAKAL) adopt a coiled-coil conformation.

Its subcellular location is the cellular thylakoid membrane. In Synechocystis sp. (strain ATCC 27184 / PCC 6803 / Kazusa), this protein is Thylakoid membrane protein slr1949.